Consider the following 370-residue polypeptide: tRNA N(3)-cytidine methyltransferase METTL2 (370 aa).

Residues tryptophan 72, tyrosine 76, glycine 181, aspartate 206, aspartate 232, leucine 233, and isoleucine 253 each contribute to the S-adenosyl-L-methionine site.

Belongs to the methyltransferase superfamily. METL family. As to quaternary structure, monomer.

It is found in the cytoplasm. The enzyme catalyses cytidine(32) in tRNA(Thr) + S-adenosyl-L-methionine = N(3)-methylcytidine(32) in tRNA(Thr) + S-adenosyl-L-homocysteine + H(+). The catalysed reaction is cytidine(32) in tRNA(Arg)(CCU) + S-adenosyl-L-methionine = N(3)-methylcytidine(32) in tRNA(Arg)(CCU) + S-adenosyl-L-homocysteine + H(+). S-adenosyl-L-methionine-dependent methyltransferase that mediates N(3)-methylcytidine modification of residue 32 of the tRNA anticodon loop of tRNA(Thr)(UGU) and tRNA(Arg)(CCU). N(3)-methylcytidine methylation by METTL2 requires the N6-threonylcarbamoylation of tRNA (t6A37) by the EKC/KEOPS complex as prerequisite. This Gallus gallus (Chicken) protein is tRNA N(3)-cytidine methyltransferase METTL2 (METTL2).